The sequence spans 149 residues: Myoglobin (149 aa).

An N-acetylthreonine modification is found at T2. The Globin domain occupies 2-143 (TEWEHVNKVW…ICSDLETLYK (142 aa)). Position 60 (H60) interacts with nitrite. Residue H60 coordinates O2. H89 contacts heme b.

The protein belongs to the globin family. As to quaternary structure, monomeric.

It is found in the cytoplasm. Its subcellular location is the sarcoplasm. The enzyme catalyses Fe(III)-heme b-[protein] + nitric oxide + H2O = Fe(II)-heme b-[protein] + nitrite + 2 H(+). The catalysed reaction is H2O2 + AH2 = A + 2 H2O. Monomeric heme protein which primary function is to store oxygen and facilitate its diffusion within muscle tissues. Reversibly binds oxygen through a pentacoordinated heme iron and enables its timely and efficient release as needed during periods of heightened demand. Depending on the oxidative conditions of tissues and cells, and in addition to its ability to bind oxygen, it also has a nitrite reductase activity whereby it regulates the production of bioactive nitric oxide. Under stress conditions, like hypoxia and anoxia, it also protects cells against reactive oxygen species thanks to its pseudoperoxidase activity. This chain is Myoglobin (mb), found in Heterodontus portusjacksoni (Port Jackson shark).